Reading from the N-terminus, the 396-residue chain is Serpin-ZXA (396 aa).

The RCL stretch occupies residues Gly343–Ala367.

This sequence belongs to the serpin family.

Probable serine protease inhibitor. This Oryza sativa subsp. japonica (Rice) protein is Serpin-ZXA.